Consider the following 344-residue polypeptide: tRNA N6-adenosine threonylcarbamoyltransferase (344 aa).

Fe cation is bound by residues histidine 112 and histidine 116. Substrate-binding positions include 134–138 (LASGG), aspartate 167, glycine 180, and asparagine 280. Aspartate 308 is a Fe cation binding site.

The protein belongs to the KAE1 / TsaD family. Fe(2+) serves as cofactor.

The protein resides in the cytoplasm. The enzyme catalyses L-threonylcarbamoyladenylate + adenosine(37) in tRNA = N(6)-L-threonylcarbamoyladenosine(37) in tRNA + AMP + H(+). Required for the formation of a threonylcarbamoyl group on adenosine at position 37 (t(6)A37) in tRNAs that read codons beginning with adenine. Is involved in the transfer of the threonylcarbamoyl moiety of threonylcarbamoyl-AMP (TC-AMP) to the N6 group of A37, together with TsaE and TsaB. TsaD likely plays a direct catalytic role in this reaction. In Rickettsia massiliae (strain Mtu5), this protein is tRNA N6-adenosine threonylcarbamoyltransferase.